A 256-amino-acid chain; its full sequence is Thiazole synthase (256 aa).

Lys96 acts as the Schiff-base intermediate with DXP in catalysis. 1-deoxy-D-xylulose 5-phosphate is bound by residues Gly157, 184 to 185, and 206 to 207; these read AG and NT.

It belongs to the ThiG family. In terms of assembly, homotetramer. Forms heterodimers with either ThiH or ThiS.

It localises to the cytoplasm. It carries out the reaction [ThiS sulfur-carrier protein]-C-terminal-Gly-aminoethanethioate + 2-iminoacetate + 1-deoxy-D-xylulose 5-phosphate = [ThiS sulfur-carrier protein]-C-terminal Gly-Gly + 2-[(2R,5Z)-2-carboxy-4-methylthiazol-5(2H)-ylidene]ethyl phosphate + 2 H2O + H(+). It functions in the pathway cofactor biosynthesis; thiamine diphosphate biosynthesis. Functionally, catalyzes the rearrangement of 1-deoxy-D-xylulose 5-phosphate (DXP) to produce the thiazole phosphate moiety of thiamine. Sulfur is provided by the thiocarboxylate moiety of the carrier protein ThiS. In vitro, sulfur can be provided by H(2)S. This is Thiazole synthase from Brucella canis (strain ATCC 23365 / NCTC 10854 / RM-666).